Consider the following 113-residue polypeptide: MRKNNILLDDAKIYTNKLYLLLIDRKDDAGYGDICDVLFQVSKKLDSTKNVEALINRLVNYIRITASTNRIKFSKDEEAVIIELGVIGQKAGLNGQYMADFSDKSQFYSIFER.

Belongs to the immunity protein EntA family.

In terms of biological role, imparts immunity to leucocin-A to naturally sensitive host strains. In Leuconostoc gelidum, this protein is Probable leucocin-A immunity protein.